The following is a 763-amino-acid chain: Amine oxidase [copper-containing] 3 (763 aa).

At 1 to 6 (MNQKTT) the chain is on the cytoplasmic side. A helical; Signal-anchor for type II membrane protein transmembrane segment spans residues 7 to 27 (LVLLALAVITIFALVCVLIAG). At 28–763 (RGGDGGEASQ…AFSHGGFFTN (736 aa)) the chain is on the extracellular side. An N-linked (GlcNAc...) asparagine glycan is attached at Asn137. A disulfide bridge links Cys198 with Cys199. Residues Asn232 and Asn294 are each glycosylated (N-linked (GlcNAc...) asparagine). Residue Asp386 is the Proton acceptor of the active site. Cys404 and Cys430 are joined by a disulfide. The active-site Schiff-base intermediate with substrate; via topaquinone is Tyr471. Residue Tyr471 is modified to 2',4',5'-topaquinone. Cu(2+)-binding residues include His520 and His522. Asp529, Leu530, Asp531, and Glu572 together coordinate Ca(2+). N-linked (GlcNAc...) asparagine glycosylation occurs at Asn618. Ca(2+) is bound by residues Glu641, Phe663, and Asn665. The N-linked (GlcNAc...) asparagine glycan is linked to Asn666. Positions 667, 673, and 674 each coordinate Ca(2+). A Cu(2+)-binding site is contributed by His684. Cys734 and Cys741 form a disulfide bridge.

It belongs to the copper/topaquinone oxidase family. In terms of assembly, homodimer; disulfide-linked. Probably forms heterodimers with AOC2. It depends on Cu(2+) as a cofactor. Ca(2+) serves as cofactor. L-topaquinone is required as a cofactor. Topaquinone (TPQ) is generated by copper-dependent autoxidation of a specific tyrosyl residue. In terms of processing, N- and O-glycosylated.

The protein resides in the cell membrane. It carries out the reaction methylamine + O2 + H2O = formaldehyde + H2O2 + NH4(+). The enzyme catalyses benzylamine + O2 + H2O = benzaldehyde + H2O2 + NH4(+). It catalyses the reaction 2-phenylethylamine + O2 + H2O = 2-phenylacetaldehyde + H2O2 + NH4(+). In terms of biological role, catalyzes the oxidative deamination of primary amines to the corresponding aldehydes with the concomitant production of hydrogen peroxide and ammonia. Has a preference for the primary monoamines methylamine and benzylamine. Could also act on 2-phenylethylamine but much less efficiently. At endothelial cells surface can also function as a cell adhesion protein that participates in lymphocyte extravasation and recirculation by mediating the binding of lymphocytes to peripheral lymph node vascular endothelial cells in an L-selectin-independent fashion. In Bos taurus (Bovine), this protein is Amine oxidase [copper-containing] 3.